The chain runs to 90 residues: MQQDKHPDYRPVVFRDRGAGYAFLTRSTATSDQTIVWDDGETYPVVEVEISSESHPFYTGKARTVDSEGRVARFERRYGAGEGQDTGEAG.

Belongs to the bacterial ribosomal protein bL31 family. Type B subfamily. Part of the 50S ribosomal subunit.

The sequence is that of Large ribosomal subunit protein bL31B-1 from Streptomyces coelicolor (strain ATCC BAA-471 / A3(2) / M145).